The sequence spans 317 residues: ADIPOR-like receptor IZH1 (317 aa).

The Lumenal portion of the chain corresponds to 1-80 (MSEERGMKEQ…FNNESINIYT (80 aa)). Residue asparagine 73 is glycosylated (N-linked (GlcNAc...) asparagine). A helical transmembrane segment spans residues 81 to 101 (HLIPGVAYLVLFLIFADLVLA). The Cytoplasmic segment spans residues 102–113 (QLLPGLDAGEHR). A helical membrane pass occupies residues 114–136 (MLRFYLLGAFTCLACSSCFHCLK). Topologically, residues 137–148 (QHSEPHSRLWSK) are lumenal. A helical membrane pass occupies residues 149-169 (VDYLGILAQITCSTISLLYYG). Topologically, residues 170 to 175 (YHSYPS) are cytoplasmic. A helical membrane pass occupies residues 176–196 (HFVFFSTLTVALCSACAVLVL). Residue asparagine 197 is glycosylated (N-linked (GlcNAc...) asparagine). Topologically, residues 197–210 (NDSFNTVAFRPLRA) are lumenal. A helical membrane pass occupies residues 211–231 (FLFMAFGLSGVIPVLAGSYQF). Residues 232-243 (GFAEWAARIQLK) lie on the Cytoplasmic side of the membrane. Residues 244–264 (YVLYEAVFYITGALVYGFRIP) traverse the membrane as a helical segment. At 265–283 (ERFAPGKFDMVGHSHQIFH) the chain is on the lumenal side. Residues 284–304 (LLVVLGTLCHFRAVTGSYIFI) traverse the membrane as a helical segment. The Cytoplasmic portion of the chain corresponds to 305–317 (CTGKHYSSLLMFI).

It belongs to the ADIPOR family.

It is found in the endoplasmic reticulum membrane. Functionally, ADIPOR-like receptor involved in zinc metabolism either by altering membrane sterol content or by directly altering cellular zinc levels. In Eremothecium gossypii (strain ATCC 10895 / CBS 109.51 / FGSC 9923 / NRRL Y-1056) (Yeast), this protein is ADIPOR-like receptor IZH1 (IZH1).